Here is a 345-residue protein sequence, read N- to C-terminus: Beta-2-glycoprotein 1 (345 aa).

The first 19 residues, 1–19 (MPPPALVLLLGFLCHVAIA), serve as a signal peptide directing secretion. 4 Sushi domains span residues 21–81 (RTCP…KCMP), 82–139 (RVCP…VCAP), 140–202 (ITCP…ECRE), and 203–262 (VRCP…SCKA). Cystine bridges form between Cys-23–Cys-66, Cys-51–Cys-79, Cys-84–Cys-124, Cys-110–Cys-137, Cys-142–Cys-188, Cys-174–Cys-200, Cys-205–Cys-248, Cys-234–Cys-260, Cys-264–Cys-315, Cys-300–Cys-325, and Cys-307–Cys-345. O-linked (GalNAc...) threonine glycosylation is present at Thr-33. Asn-92 is a glycosylation site (N-linked (GlcNAc...) asparagine). N-linked (GlcNAc...) asparagine glycans are attached at residues Asn-162, Asn-183, and Asn-193. Asn-253 carries N-linked (GlcNAc...) asparagine glycosylation. The tract at residues 263–345 (SCKLSIKRAT…KTDASDVKPC (83 aa)) is sushi-like.

In terms of tissue distribution, expressed by the liver and secreted in plasma.

It is found in the secreted. Its function is as follows. Binds to various kinds of negatively charged substances such as heparin, phospholipids, and dextran sulfate. May prevent activation of the intrinsic blood coagulation cascade by binding to phospholipids on the surface of damaged cells. The sequence is that of Beta-2-glycoprotein 1 (APOH) from Bos taurus (Bovine).